A 257-amino-acid chain; its full sequence is MEAGKSAEDVFNISRLYLYINDKAILKDITIKIPNNSIFGIMGPSGSGKSTLLKVLNRLIEIYDSKIKVDGKVLYFGKDIFQIDAIKLRKEVGMVFQQPNPFPHLSIYDNIAYPLKSHGIKEKREIKKIVEECLRKVGLWKEVYDRLNSPASQLSGGQQQRLTIARALALKPKVLLMDEPTSMIDIVNSQAIEKLITELKNEIAIVIVSHNPQQVARVADYVAFLYNGELVEWGSSNEIFTSPKNELTEKYVIGRIS.

The ABC transporter domain maps to 11-252; sequence FNISRLYLYI…PKNELTEKYV (242 aa). 43-50 provides a ligand contact to ATP; that stretch reads GPSGSGKS.

The protein belongs to the ABC transporter superfamily. Phosphate importer (TC 3.A.1.7) family. The complex is composed of two ATP-binding proteins (PstB), two transmembrane proteins (PstC and PstA) and a solute-binding protein (PstS).

The protein localises to the cell membrane. It carries out the reaction phosphate(out) + ATP + H2O = ADP + 2 phosphate(in) + H(+). In terms of biological role, part of the ABC transporter complex PstSACB involved in phosphate import. Responsible for energy coupling to the transport system. The protein is Phosphate import ATP-binding protein PstB of Saccharolobus solfataricus (strain ATCC 35092 / DSM 1617 / JCM 11322 / P2) (Sulfolobus solfataricus).